A 290-amino-acid polypeptide reads, in one-letter code: Protease HtpX homolog (290 aa).

2 consecutive transmembrane segments (helical) span residues 4-24 (ILLFVLTNVMVVAVLGIVASL) and 39-59 (TALLGFALVMGFGGAIISLLI). Zn(2+) is bound at residue histidine 144. Residue glutamate 145 is part of the active site. Histidine 148 contributes to the Zn(2+) binding site. The next 2 helical transmembrane spans lie at 159 to 179 (LIQGVMNTFVVFLSRVIGYAV) and 199 to 219 (VSTIVLDIVLGFAAAIVVAWF). A Zn(2+)-binding site is contributed by glutamate 224.

The protein belongs to the peptidase M48B family. It depends on Zn(2+) as a cofactor.

Its subcellular location is the cell inner membrane. This Variovorax paradoxus (strain S110) protein is Protease HtpX homolog.